The following is a 71-amino-acid chain: Translation initiation factor IF-1 (71 aa).

Residues 1-71 (MSKQEMLSFS…LTKGRITFRG (71 aa)) enclose the S1-like domain.

The protein belongs to the IF-1 family. Component of the 30S ribosomal translation pre-initiation complex which assembles on the 30S ribosome in the order IF-2 and IF-3, IF-1 and N-formylmethionyl-tRNA(fMet); mRNA recruitment can occur at any time during PIC assembly.

It is found in the cytoplasm. In terms of biological role, one of the essential components for the initiation of protein synthesis. Stabilizes the binding of IF-2 and IF-3 on the 30S subunit to which N-formylmethionyl-tRNA(fMet) subsequently binds. Helps modulate mRNA selection, yielding the 30S pre-initiation complex (PIC). Upon addition of the 50S ribosomal subunit IF-1, IF-2 and IF-3 are released leaving the mature 70S translation initiation complex. The sequence is that of Translation initiation factor IF-1 from Pelagibacter ubique (strain HTCC1062).